The primary structure comprises 192 residues: Ribosomal RNA small subunit methyltransferase G (192 aa).

S-adenosyl-L-methionine-binding positions include G59, 111–112, and R124; that span reads IE.

This sequence belongs to the methyltransferase superfamily. RNA methyltransferase RsmG family.

It is found in the cytoplasm. Its function is as follows. Specifically methylates the N7 position of a guanine in 16S rRNA. The protein is Ribosomal RNA small subunit methyltransferase G of Mycoplasma genitalium (strain ATCC 33530 / DSM 19775 / NCTC 10195 / G37) (Mycoplasmoides genitalium).